A 538-amino-acid polypeptide reads, in one-letter code: MARELSESTALDAQSTEDQMELLVIKVEEEEAGFPSSPDLGSEGSRERFRGFRYPEAAGPREALSRLRELCRQWLQPEMHSKEQILELLVLEQFLTILPGNLQSWVREQHPESGEEVVVLLEYLERQLDEPAPQVSGVDQGQELLCCKMALLTPAPGSQSSQFQLMKALLKHESVGSQPLQDRVLQVPVLAHGGCCREDKVVASRLTPESQGLLKVEDVALTLTPEWTQQDSSQGNLCRDEKQENHGSLVSLGDEKQTKSRDLPPAEELPEKEHGKISCHLREDIAQIPTCAEAGEQEGRLQRKQKNATGGRRHICHECGKSFAQSSGLSKHRRIHTGEKPYECEECGKAFIGSSALVIHQRVHTGEKPYECEECGKAFSHSSDLIKHQRTHTGEKPYECDDCGKTFSQSCSLLEHHRIHTGEKPYQCSMCGKAFRRSSHLLRHQRIHTGDKNVQEPEQGEAWKSRMESQLENVETPMSYKCNECERSFTQNTGLIEHQKIHTGEKPYQCNACGKGFTRISYLVQHQRSHVGKNILSQ.

A Phosphoserine modification is found at S42. Positions R46–L128 constitute an SCAN box domain. Residue K171 forms a Glycyl lysine isopeptide (Lys-Gly) (interchain with G-Cter in SUMO2) linkage. T207 is subject to Phosphothreonine. A KRAB domain is found at L214–H274. Positions E226–N236 are enriched in polar residues. The interval E226 to H274 is disordered. The segment covering G253–H274 has biased composition (basic and acidic residues). 5 C2H2-type zinc fingers span residues H314–H336, Y342–H364, Y370–H392, Y398–H420, and Y426–H448. T449 carries the phosphothreonine modification. 2 C2H2-type zinc fingers span residues Y480–H502 and Y508–H530.

Belongs to the krueppel C2H2-type zinc-finger protein family.

The protein resides in the nucleus. It localises to the cytoplasm. Functionally, transcriptional factor that binds to the consensus sequence 5'-[GT][AG][AGT]GGGG-3' and acts as a repressor of autophagy. Specifically represses expression of genes involved in autophagy and lysosome biogenesis/function such as MAP1LC3B, ULK1 or WIPI2. Associates with chromatin at the ITGB4 and VEGF promoters. Also acts as a transcription activator and promotes cancer cell progression and/or migration in various tumors and myelomas. The protein is Zinc finger protein with KRAB and SCAN domains 3 (ZKSCAN3) of Homo sapiens (Human).